The chain runs to 510 residues: Metalloprotease TIKI homolog (510 aa).

The first 30 residues, 1–30 (MQVKIVQVFPCLVLLVKLVLLSVLLPSATG), serve as a signal peptide directing secretion. The Extracellular segment spans residues 31–489 (SYHCSNNATQ…FIPSASSGLR (459 aa)). N-linked (GlcNAc...) asparagine glycans are attached at residues asparagine 37, asparagine 98, asparagine 108, asparagine 141, asparagine 223, asparagine 281, asparagine 322, asparagine 383, and asparagine 417. Positions 435–471 (TSLNSATASTTVATPTSSVTPPTSSSSQTRSLTISDS) are enriched in low complexity. The tract at residues 435 to 477 (TSLNSATASTTVATPTSSVTPPTSSSSQTRSLTISDSQRTSDD) is disordered. A helical transmembrane segment spans residues 490-510 (YNIGLVCVTLFFVLLIITSAL).

This sequence belongs to the TIKI family. The cofactor is Mn(2+). Co(2+) serves as cofactor.

The protein localises to the membrane. Functionally, metalloprotease. The polypeptide is Metalloprotease TIKI homolog (Amphimedon queenslandica (Sponge)).